A 120-amino-acid chain; its full sequence is UPF0145 protein Mboo_1021 (120 aa).

It belongs to the UPF0145 family.

In Methanoregula boonei (strain DSM 21154 / JCM 14090 / 6A8), this protein is UPF0145 protein Mboo_1021.